A 91-amino-acid chain; its full sequence is Putative membrane protein insertion efficiency factor (91 aa).

The interval 72–91 (SGGNDPVPEKLTHINHQHEK) is disordered. Positions 78-91 (VPEKLTHINHQHEK) are enriched in basic and acidic residues.

The protein belongs to the UPF0161 family.

Its subcellular location is the cell inner membrane. Functionally, could be involved in insertion of integral membrane proteins into the membrane. The polypeptide is Putative membrane protein insertion efficiency factor (Pseudoalteromonas translucida (strain TAC 125)).